A 276-amino-acid polypeptide reads, in one-letter code: Dermonecrotic toxin LlSicTox-alphaIV3 (276 aa).

The active site involves His-5. Glu-25 and Asp-27 together coordinate Mg(2+). The active-site Nucleophile is the His-41. 2 disulfides stabilise this stretch: Cys-45-Cys-51 and Cys-47-Cys-192. A Mg(2+)-binding site is contributed by Asp-85.

It belongs to the arthropod phospholipase D family. Class II subfamily. Requires Mg(2+) as cofactor. As to expression, expressed by the venom gland.

Its subcellular location is the secreted. It carries out the reaction an N-(acyl)-sphingosylphosphocholine = an N-(acyl)-sphingosyl-1,3-cyclic phosphate + choline. The enzyme catalyses an N-(acyl)-sphingosylphosphoethanolamine = an N-(acyl)-sphingosyl-1,3-cyclic phosphate + ethanolamine. It catalyses the reaction a 1-acyl-sn-glycero-3-phosphocholine = a 1-acyl-sn-glycero-2,3-cyclic phosphate + choline. The catalysed reaction is a 1-acyl-sn-glycero-3-phosphoethanolamine = a 1-acyl-sn-glycero-2,3-cyclic phosphate + ethanolamine. Functionally, dermonecrotic toxins cleave the phosphodiester linkage between the phosphate and headgroup of certain phospholipids (sphingolipid and lysolipid substrates), forming an alcohol (often choline) and a cyclic phosphate. This toxin acts on sphingomyelin (SM). It may also act on ceramide phosphoethanolamine (CPE), lysophosphatidylcholine (LPC) and lysophosphatidylethanolamine (LPE), but not on lysophosphatidylserine (LPS), and lysophosphatidylglycerol (LPG). It acts by transphosphatidylation, releasing exclusively cyclic phosphate products as second products. Induces dermonecrosis, hemolysis, increased vascular permeability, edema, inflammatory response, and platelet aggregation. The chain is Dermonecrotic toxin LlSicTox-alphaIV3 from Loxosceles laeta (South American recluse spider).